We begin with the raw amino-acid sequence, 124 residues long: Small ribosomal subunit protein uS12 (124 aa).

Aspartate 89 is subject to 3-methylthioaspartic acid. Positions 104-124 are disordered; sequence SAGVQNRNRGRSKYGTKRPKK. Positions 111–124 are enriched in basic residues; sequence NRGRSKYGTKRPKK.

Belongs to the universal ribosomal protein uS12 family. Part of the 30S ribosomal subunit. Contacts proteins S8 and S17. May interact with IF1 in the 30S initiation complex.

With S4 and S5 plays an important role in translational accuracy. In terms of biological role, interacts with and stabilizes bases of the 16S rRNA that are involved in tRNA selection in the A site and with the mRNA backbone. Located at the interface of the 30S and 50S subunits, it traverses the body of the 30S subunit contacting proteins on the other side and probably holding the rRNA structure together. The combined cluster of proteins S8, S12 and S17 appears to hold together the shoulder and platform of the 30S subunit. This chain is Small ribosomal subunit protein uS12, found in Pelotomaculum thermopropionicum (strain DSM 13744 / JCM 10971 / SI).